Here is a 320-residue protein sequence, read N- to C-terminus: Methionyl-tRNA formyltransferase (320 aa).

114-117 (SLLP) serves as a coordination point for (6S)-5,6,7,8-tetrahydrofolate.

Belongs to the Fmt family.

It carries out the reaction L-methionyl-tRNA(fMet) + (6R)-10-formyltetrahydrofolate = N-formyl-L-methionyl-tRNA(fMet) + (6S)-5,6,7,8-tetrahydrofolate + H(+). Its function is as follows. Attaches a formyl group to the free amino group of methionyl-tRNA(fMet). The formyl group appears to play a dual role in the initiator identity of N-formylmethionyl-tRNA by promoting its recognition by IF2 and preventing the misappropriation of this tRNA by the elongation apparatus. This chain is Methionyl-tRNA formyltransferase, found in Acinetobacter baumannii (strain AB307-0294).